The primary structure comprises 630 residues: Probable potassium transport system protein Kup 1 (630 aa).

A run of 12 helical transmembrane segments spans residues 15–35 (FAAL…TSPL), 59–79 (LSLI…TFIM), 109–129 (WIMI…MVTP), 145–165 (PALK…LFFV), 173–193 (VGAF…LLGV), 223–243 (LVAM…YADM), 255–275 (WFAF…ALIL), 297–317 (LVGL…SGAF), 345–365 (IYLP…VLGF), 374–394 (AYGI…TVVV), 405–425 (AGLL…ANIL), and 427–447 (IPDG…LMTT).

The protein belongs to the HAK/KUP transporter (TC 2.A.72) family.

It is found in the cell inner membrane. It catalyses the reaction K(+)(in) + H(+)(in) = K(+)(out) + H(+)(out). Its function is as follows. Transport of potassium into the cell. Likely operates as a K(+):H(+) symporter. The chain is Probable potassium transport system protein Kup 1 from Dechloromonas aromatica (strain RCB).